We begin with the raw amino-acid sequence, 130 residues long: Small ribosomal subunit protein uS11 (130 aa).

It belongs to the universal ribosomal protein uS11 family. Part of the 30S ribosomal subunit. Interacts with proteins S7 and S18. Binds to IF-3.

Located on the platform of the 30S subunit, it bridges several disparate RNA helices of the 16S rRNA. Forms part of the Shine-Dalgarno cleft in the 70S ribosome. The protein is Small ribosomal subunit protein uS11 of Latilactobacillus sakei subsp. sakei (strain 23K) (Lactobacillus sakei subsp. sakei).